A 188-amino-acid polypeptide reads, in one-letter code: Peptidyl-tRNA hydrolase (188 aa).

TRNA is bound at residue Tyr-17. The active-site Proton acceptor is His-22. TRNA contacts are provided by Tyr-65, Asn-67, and Asn-113.

The protein belongs to the PTH family. Monomer.

The protein resides in the cytoplasm. It carries out the reaction an N-acyl-L-alpha-aminoacyl-tRNA + H2O = an N-acyl-L-amino acid + a tRNA + H(+). Hydrolyzes ribosome-free peptidyl-tRNAs (with 1 or more amino acids incorporated), which drop off the ribosome during protein synthesis, or as a result of ribosome stalling. In terms of biological role, catalyzes the release of premature peptidyl moieties from peptidyl-tRNA molecules trapped in stalled 50S ribosomal subunits, and thus maintains levels of free tRNAs and 50S ribosomes. The polypeptide is Peptidyl-tRNA hydrolase (Mycoplasma pneumoniae (strain ATCC 29342 / M129 / Subtype 1) (Mycoplasmoides pneumoniae)).